The sequence spans 472 residues: MNAVTDLKQDYLVADISLAGWGRKEIAIAETEMPGLMAIRDEFAAAQPLKGARIAGSLHMTIQTAVLIETLKALGADVRWASCNIFSTQDHAAAAIAAGGTPVFAFKGESLKEYWDFTHRIFDWVDGGTPNMILDDGGDATLLLHLGAKAEKDASLIANPGSEEETFLFAAIKEKLAKDPSWYSRNLAAIRGVTEETTTGVHRLYQMAQKGDLKFPAINVNDSVTKSKFDNLYGCRESLVDGIKRATDVMIAGKIAIVAGYGDVGKGSAQALRALSAQVWVTEIDPICALQAAMEGYRVVTMDYAAEHGDIFVTCTGNYHVITHDHMARMKDQAIVCNIGHFDNEIDIASIEKYEWDEIKPQVDHVKFPDGKKIIILAKGRLVNLGCATGHPSYVMSSSFANQTIAQIELWQERDSGKYPVGVYTLPKHLDEKVARLQLRKLNAQLTELTEQQAAYIGVKKEGPYKADHYRY.

Thr-61, Asp-136, and Glu-196 together coordinate substrate. 197–199 (TTT) contributes to the NAD(+) binding site. Positions 226 and 230 each coordinate substrate. NAD(+)-binding positions include Asn-231, 260–265 (GYGDVG), Glu-283, Asn-318, 339–341 (IGH), and Asn-384.

Belongs to the adenosylhomocysteinase family. NAD(+) is required as a cofactor.

It localises to the cytoplasm. The enzyme catalyses S-adenosyl-L-homocysteine + H2O = L-homocysteine + adenosine. The protein operates within amino-acid biosynthesis; L-homocysteine biosynthesis; L-homocysteine from S-adenosyl-L-homocysteine: step 1/1. Its function is as follows. May play a key role in the regulation of the intracellular concentration of adenosylhomocysteine. This Cupriavidus pinatubonensis (strain JMP 134 / LMG 1197) (Cupriavidus necator (strain JMP 134)) protein is Adenosylhomocysteinase.